The primary structure comprises 361 residues: POU domain, class 3, transcription factor 4 (361 aa).

Disordered stretches follow at residues 99–131 (PHVA…GQPL) and 144–192 (MLEH…PTSD). The segment covering 119–131 (APNSSITSSGQPL) has biased composition (polar residues). Over residues 165–183 (VLREPPDHGELGSHHCQDH) the composition is skewed to basic and acidic residues. Positions 186–260 (EETPTSDELE…LLNKWLEEAD (75 aa)) constitute a POU-specific domain. Serine 265 is modified (phosphoserine). Positions 278-337 (KRKKRTSIEVSVKGVLETHFLKCPKPAAQEISSLADSLQLEKEVVRVWFCNRRQKEKRMT) form a DNA-binding region, homeobox. Positions 334-361 (KRMTPPGDQQPHEVYSHTVKTDASCHDL) are disordered. A compositionally biased stretch (basic and acidic residues) spans 343 to 361 (QPHEVYSHTVKTDASCHDL).

It belongs to the POU transcription factor family. Class-3 subfamily. As to quaternary structure, interacts with HNRNPU. In terms of tissue distribution, brain specific.

Its subcellular location is the nucleus. Its function is as follows. Probable transcription factor which exert its primary action widely during early neural development and in a very limited set of neurons in the mature brain. This chain is POU domain, class 3, transcription factor 4 (Pou3f4), found in Mus musculus (Mouse).